Consider the following 96-residue polypeptide: uncharacterized protein (96 aa).

Residues 1–21 (MLASVLILGAIAVGSAIPTIA) form the signal peptide.

This is an uncharacterized protein from Archaeoglobus fulgidus (strain ATCC 49558 / DSM 4304 / JCM 9628 / NBRC 100126 / VC-16).